A 276-amino-acid chain; its full sequence is Large ribosomal subunit protein uL2 (276 aa).

Residues Gly-223–Lys-276 are disordered. Residues Lys-265–Lys-276 show a composition bias toward basic and acidic residues.

Belongs to the universal ribosomal protein uL2 family. As to quaternary structure, part of the 50S ribosomal subunit. Forms a bridge to the 30S subunit in the 70S ribosome.

In terms of biological role, one of the primary rRNA binding proteins. Required for association of the 30S and 50S subunits to form the 70S ribosome, for tRNA binding and peptide bond formation. It has been suggested to have peptidyltransferase activity; this is somewhat controversial. Makes several contacts with the 16S rRNA in the 70S ribosome. This Caldicellulosiruptor saccharolyticus (strain ATCC 43494 / DSM 8903 / Tp8T 6331) protein is Large ribosomal subunit protein uL2.